The chain runs to 567 residues: TPR repeat-containing protein MJ1428 (567 aa).

TPR repeat units lie at residues Y14 to N47, P48 to N81, Y83 to E115, E116 to K148, L150 to H183, I199 to S234, I236 to S268, L269 to N301, Y303 to E335, L344 to S379, R380 to D412, S414 to L446, and A505 to R538.

The sequence is that of TPR repeat-containing protein MJ1428 from Methanocaldococcus jannaschii (strain ATCC 43067 / DSM 2661 / JAL-1 / JCM 10045 / NBRC 100440) (Methanococcus jannaschii).